Here is a 606-residue protein sequence, read N- to C-terminus: NADH-ubiquinone oxidoreductase chain 5 (606 aa).

A run of 15 helical transmembrane segments spans residues 3 to 23 (VINL…LPIT), 38 to 58 (ITKM…LLFL), 87 to 107 (FFSL…MEFS), 124 to 144 (LLLF…LQLF), 180 to 200 (IGDM…NSWE), 216 to 236 (LLGL…HPWL), 244 to 264 (TPVS…FTLI), 276 to 296 (IQTS…ICAL), 304 to 323 (IIAL…IGIN), 328 to 350 (AFTH…GSII), 369 to 389 (MPIT…MPFL), 404 to 424 (MSYI…MTAS), 460 to 480 (LILG…PHTT), 483 to 503 (MTMP…GFTV), and 586 to 606 (LMKL…LITL).

Belongs to the complex I subunit 5 family. In terms of assembly, core subunit of respiratory chain NADH dehydrogenase (Complex I) which is composed of 45 different subunits.

The protein localises to the mitochondrion inner membrane. The enzyme catalyses a ubiquinone + NADH + 5 H(+)(in) = a ubiquinol + NAD(+) + 4 H(+)(out). Its function is as follows. Core subunit of the mitochondrial membrane respiratory chain NADH dehydrogenase (Complex I) which catalyzes electron transfer from NADH through the respiratory chain, using ubiquinone as an electron acceptor. Essential for the catalytic activity and assembly of complex I. This is NADH-ubiquinone oxidoreductase chain 5 (MT-ND5) from Elephas maximus (Indian elephant).